Consider the following 125-residue polypeptide: Phosphoribosyl-AMP cyclohydrolase (125 aa).

Asp-74 lines the Mg(2+) pocket. Cys-75 serves as a coordination point for Zn(2+). 2 residues coordinate Mg(2+): Asp-76 and Asp-78. Cys-92 and Cys-99 together coordinate Zn(2+).

It belongs to the PRA-CH family. As to quaternary structure, homodimer. It depends on Mg(2+) as a cofactor. Zn(2+) serves as cofactor.

It localises to the cytoplasm. The catalysed reaction is 1-(5-phospho-beta-D-ribosyl)-5'-AMP + H2O = 1-(5-phospho-beta-D-ribosyl)-5-[(5-phospho-beta-D-ribosylamino)methylideneamino]imidazole-4-carboxamide. Its pathway is amino-acid biosynthesis; L-histidine biosynthesis; L-histidine from 5-phospho-alpha-D-ribose 1-diphosphate: step 3/9. Its function is as follows. Catalyzes the hydrolysis of the adenine ring of phosphoribosyl-AMP. This chain is Phosphoribosyl-AMP cyclohydrolase, found in Desulfatibacillum aliphaticivorans.